The chain runs to 285 residues: mRNA decay factor CTH2 (285 aa).

The segment at 37-55 is required for mRNA decay activity; it reads INIRELEEYYNKTILNEDN. The interval 132–164 is disordered; it reads LQQLSQQKPKNDASFSSEKESSAQPKVKSQVQE. Residues 153-164 are compositionally biased toward polar residues; it reads SAQPKVKSQVQE. 2 consecutive C3H1-type zinc fingers follow at residues 169–197 and 207–235; these read LYKT…HGLG and NFRT…HGDD. The segment at 252–271 is disordered; the sequence is STSKQSDEKRSNGRGSAKKK.

As to quaternary structure, interacts with DHH1.

The protein localises to the nucleus. It localises to the cytoplasm. The protein resides in the P-body. Its function is as follows. Binds to specific AU-rich elements (ARE) in the 3'-untranslated region of target mRNAs and promotes their degradation. In response to iron deficiency, promotes the decay of many mRNAs encoding proteins involved in iron-dependent pathways. Recruits the DHH1 helicase to the SDH4 mRNA and promotes SDH4 mRNA decay. Also destabilizes target mRNA by modulating 3'-end processing, creating extended transcripts that are prone for degradation. This chain is mRNA decay factor CTH2 (TIS11), found in Saccharomyces cerevisiae (strain ATCC 204508 / S288c) (Baker's yeast).